Here is a 307-residue protein sequence, read N- to C-terminus: Ribosomal RNA large subunit methyltransferase F (307 aa).

The protein belongs to the methyltransferase superfamily. METTL16/RlmF family.

It localises to the cytoplasm. The enzyme catalyses adenosine(1618) in 23S rRNA + S-adenosyl-L-methionine = N(6)-methyladenosine(1618) in 23S rRNA + S-adenosyl-L-homocysteine + H(+). Its function is as follows. Specifically methylates the adenine in position 1618 of 23S rRNA. This chain is Ribosomal RNA large subunit methyltransferase F, found in Bacteroides thetaiotaomicron (strain ATCC 29148 / DSM 2079 / JCM 5827 / CCUG 10774 / NCTC 10582 / VPI-5482 / E50).